A 253-amino-acid polypeptide reads, in one-letter code: 5'/3'-nucleotidase SurE (253 aa).

Residues Asp8, Asp9, Ser39, and Asn92 each contribute to the a divalent metal cation site.

The protein belongs to the SurE nucleotidase family. A divalent metal cation is required as a cofactor.

The protein resides in the cytoplasm. The enzyme catalyses a ribonucleoside 5'-phosphate + H2O = a ribonucleoside + phosphate. The catalysed reaction is a ribonucleoside 3'-phosphate + H2O = a ribonucleoside + phosphate. It carries out the reaction [phosphate](n) + H2O = [phosphate](n-1) + phosphate + H(+). Functionally, nucleotidase with a broad substrate specificity as it can dephosphorylate various ribo- and deoxyribonucleoside 5'-monophosphates and ribonucleoside 3'-monophosphates with highest affinity to 3'-AMP. Also hydrolyzes polyphosphate (exopolyphosphatase activity) with the preference for short-chain-length substrates (P20-25). Might be involved in the regulation of dNTP and NTP pools, and in the turnover of 3'-mononucleotides produced by numerous intracellular RNases (T1, T2, and F) during the degradation of various RNAs. This is 5'/3'-nucleotidase SurE from Cronobacter sakazakii (strain ATCC BAA-894) (Enterobacter sakazakii).